Consider the following 110-residue polypeptide: UPF0102 protein HH_1751 (110 aa).

This sequence belongs to the UPF0102 family.

In Helicobacter hepaticus (strain ATCC 51449 / 3B1), this protein is UPF0102 protein HH_1751.